Here is an 82-residue protein sequence, read N- to C-terminus: Cytochrome b-c1 complex subunit 8 (82 aa).

Over 1-43 the chain is Mitochondrial matrix; that stretch reads MGREFGNLARIRHVISYSLSPFEQRAFPSYFSKGIPNVLRRTR. S16 carries the post-translational modification Phosphoserine. K33 is modified (N6-acetyllysine; alternate). An N6-succinyllysine; alternate modification is found at K33. Residues 44-62 form a helical membrane-spanning segment; that stretch reads ERILRVAPPFVVVYLIYTW. Residues 63–82 lie on the Mitochondrial intermembrane side of the membrane; the sequence is GNQEFEQSKRKNPAMYENDK.

The protein belongs to the UQCRQ/QCR8 family. As to quaternary structure, component of the ubiquinol-cytochrome c oxidoreductase (cytochrome b-c1 complex, complex III, CIII), a multisubunit enzyme composed of 11 subunits. The complex is composed of 3 respiratory subunits cytochrome b, cytochrome c1 and Rieske protein UQCRFS1, 2 core protein subunits UQCRC1/QCR1 and UQCRC2/QCR2, and 6 low-molecular weight protein subunits UQCRH/QCR6, UQCRB/QCR7, UQCRQ/QCR8, UQCR10/QCR9, UQCR11/QCR10 and subunit 9, the cleavage product of Rieske protein UQCRFS1. The complex exists as an obligatory dimer and forms supercomplexes (SCs) in the inner mitochondrial membrane with NADH-ubiquinone oxidoreductase (complex I, CI) and cytochrome c oxidase (complex IV, CIV), resulting in different assemblies (supercomplex SCI(1)III(2)IV(1) and megacomplex MCI(2)III(2)IV(2)). Interacts with UQCC6.

It localises to the mitochondrion inner membrane. Its function is as follows. Component of the ubiquinol-cytochrome c oxidoreductase, a multisubunit transmembrane complex that is part of the mitochondrial electron transport chain which drives oxidative phosphorylation. The respiratory chain contains 3 multisubunit complexes succinate dehydrogenase (complex II, CII), ubiquinol-cytochrome c oxidoreductase (cytochrome b-c1 complex, complex III, CIII) and cytochrome c oxidase (complex IV, CIV), that cooperate to transfer electrons derived from NADH and succinate to molecular oxygen, creating an electrochemical gradient over the inner membrane that drives transmembrane transport and the ATP synthase. The cytochrome b-c1 complex catalyzes electron transfer from ubiquinol to cytochrome c, linking this redox reaction to translocation of protons across the mitochondrial inner membrane, with protons being carried across the membrane as hydrogens on the quinol. In the process called Q cycle, 2 protons are consumed from the matrix, 4 protons are released into the intermembrane space and 2 electrons are passed to cytochrome c. This chain is Cytochrome b-c1 complex subunit 8 (Uqcrq), found in Mus musculus (Mouse).